Consider the following 197-residue polypeptide: ADP-ribosylation factor-like protein 16 (197 aa).

Residues 30-37 (GATGVGKT), 82-86 (ELGGC), and 139-142 (NKID) contribute to the GTP site.

The protein belongs to the small GTPase superfamily. Arf family. In terms of assembly, interacts with RIGI; this interaction is GTP-dependent and induced upon viral infection; this interaction suppresses the RNA sensing activity of RIGI.

The protein localises to the cytoplasm. Its function is as follows. May suppress the RNA sensing activity of RIGI in a GTP-dependent. In Homo sapiens (Human), this protein is ADP-ribosylation factor-like protein 16.